The sequence spans 303 residues: Ribosomal protein L11 methyltransferase (303 aa).

Residues Thr146, Gly167, Asp189, and Asn236 each contribute to the S-adenosyl-L-methionine site.

It belongs to the methyltransferase superfamily. PrmA family.

The protein resides in the cytoplasm. The enzyme catalyses L-lysyl-[protein] + 3 S-adenosyl-L-methionine = N(6),N(6),N(6)-trimethyl-L-lysyl-[protein] + 3 S-adenosyl-L-homocysteine + 3 H(+). In terms of biological role, methylates ribosomal protein L11. The polypeptide is Ribosomal protein L11 methyltransferase (Acinetobacter baylyi (strain ATCC 33305 / BD413 / ADP1)).